Here is a 554-residue protein sequence, read N- to C-terminus: Folate synthesis bifunctional protein, mitochondrial (554 aa).

The N-terminal 42 residues, 1 to 42 (MAPLLSQTLIHTGRFLLRRFLEPPPAVISAVAASRVCFHRYY), are a transit peptide targeting the mitochondrion. Positions 90–215 (VIALGSNIGN…SFVLAPLVDL (126 aa)) are HPPK. In terms of domain architecture, Pterin-binding spans 273 to 541 (THVMGILNLT…NVRHNADAAK (269 aa)). A DHPS region spans residues 275–554 (VMGILNLTPD…AMLRRRRSKG (280 aa)). Asparagine 280 lines the Mg(2+) pocket. (7,8-dihydropterin-6-yl)methyl diphosphate contacts are provided by residues threonine 320, aspartate 357, asparagine 376, aspartate 449, lysine 494, and 529 to 531 (RVH).

It in the N-terminal section; belongs to the HPPK family. The protein in the C-terminal section; belongs to the DHPS family. Mg(2+) is required as a cofactor. In terms of tissue distribution, ubiquitous.

The protein localises to the mitochondrion. It catalyses the reaction 6-hydroxymethyl-7,8-dihydropterin + ATP = (7,8-dihydropterin-6-yl)methyl diphosphate + AMP + H(+). The catalysed reaction is (7,8-dihydropterin-6-yl)methyl diphosphate + 4-aminobenzoate = 7,8-dihydropteroate + diphosphate. Its pathway is cofactor biosynthesis; tetrahydrofolate biosynthesis; 2-amino-4-hydroxy-6-hydroxymethyl-7,8-dihydropteridine diphosphate from 7,8-dihydroneopterin triphosphate: step 4/4. The protein operates within cofactor biosynthesis; tetrahydrofolate biosynthesis; 7,8-dihydrofolate from 2-amino-4-hydroxy-6-hydroxymethyl-7,8-dihydropteridine diphosphate and 4-aminobenzoate: step 1/2. Its function is as follows. Catalyzes the first two consecutive steps of tetrahydrofolate biosynthesis. In Arabidopsis thaliana (Mouse-ear cress), this protein is Folate synthesis bifunctional protein, mitochondrial.